Reading from the N-terminus, the 207-residue chain is Small ribosomal subunit protein uS4 (207 aa).

The interval lysine 31–glutamine 55 is disordered. A compositionally biased stretch (polar residues) spans glycine 42–glycine 53. The 64-residue stretch at serine 97–leucine 160 folds into the S4 RNA-binding domain.

This sequence belongs to the universal ribosomal protein uS4 family. As to quaternary structure, part of the 30S ribosomal subunit. Contacts protein S5. The interaction surface between S4 and S5 is involved in control of translational fidelity.

Functionally, one of the primary rRNA binding proteins, it binds directly to 16S rRNA where it nucleates assembly of the body of the 30S subunit. Its function is as follows. With S5 and S12 plays an important role in translational accuracy. This chain is Small ribosomal subunit protein uS4, found in Burkholderia orbicola (strain MC0-3).